The following is a 473-amino-acid chain: MKILYSQRRFYHVETLFNGTLALSGRDQETTGFAWWAGNARLINLSGKLLGAHVAHAGLIVFWAGAMNLFEVAHFVPEKPMYEQGLILLPHLATLGWGVGPGGEVIDTFPYFVSGVLHLISSAVLGFGGIYHALIGPETLEESFPFFGYVWKDKNKMTTILGIHLILLGAGAFLLVFKALYFGGIYDTWAPGGGDVRKITNLTLSPGVIFGYLLKSPFGGEGWIVSVDNLEDIIGGHVWLGSICIFGGIWHILTKPFAWARRALVWSGEAYLSYSLGAIAVFGFIACCFVWFNNTAYPSEFYGPTGPEASQAQAFTFLVRDQRLGANVGSAQGPTGLGKYLMRSPTGEIIFGGETMRFWDLRAPWLEPLRGPNGLDLSKLKKDIQPWQERRSAEYMTHAPLGSLNSVGGVATEINAVNYVSPRSWLATSHFVLGFFFFVGHLWHAGRARAAAAGFEKGIDRDFEPVLSMTPLN.

Positions 1 to 14 (MKILYSQRRFYHVE) are excised as a propeptide. An N-acetylthreonine modification is found at threonine 15. The residue at position 15 (threonine 15) is a Phosphothreonine. Helical transmembrane passes span 69–93 (LFEV…PHLA), 134–155 (LIGP…KDKN), 178–200 (KALY…RKIT), 255–275 (KPFA…LSYS), and 291–312 (WFNN…ASQA). Residue glutamate 367 participates in [CaMn4O5] cluster binding. A helical membrane pass occupies residues 447–471 (RARAAAAGFEKGIDRDFEPVLSMTP).

The protein belongs to the PsbB/PsbC family. PsbC subfamily. As to quaternary structure, PSII is composed of 1 copy each of membrane proteins PsbA, PsbB, PsbC, PsbD, PsbE, PsbF, PsbH, PsbI, PsbJ, PsbK, PsbL, PsbM, PsbT, PsbX, PsbY, PsbZ, Psb30/Ycf12, at least 3 peripheral proteins of the oxygen-evolving complex and a large number of cofactors. It forms dimeric complexes. The cofactor is Binds multiple chlorophylls and provides some of the ligands for the Ca-4Mn-5O cluster of the oxygen-evolving complex. It may also provide a ligand for a Cl- that is required for oxygen evolution. PSII binds additional chlorophylls, carotenoids and specific lipids..

It is found in the plastid. The protein localises to the chloroplast thylakoid membrane. In terms of biological role, one of the components of the core complex of photosystem II (PSII). It binds chlorophyll and helps catalyze the primary light-induced photochemical processes of PSII. PSII is a light-driven water:plastoquinone oxidoreductase, using light energy to abstract electrons from H(2)O, generating O(2) and a proton gradient subsequently used for ATP formation. This chain is Photosystem II CP43 reaction center protein, found in Physcomitrium patens (Spreading-leaved earth moss).